A 269-amino-acid polypeptide reads, in one-letter code: Hydroxyethylthiazole kinase (269 aa).

Met-46 provides a ligand contact to substrate. 2 residues coordinate ATP: Arg-122 and Thr-168. Gly-195 provides a ligand contact to substrate.

It belongs to the Thz kinase family. Mg(2+) is required as a cofactor.

It catalyses the reaction 5-(2-hydroxyethyl)-4-methylthiazole + ATP = 4-methyl-5-(2-phosphooxyethyl)-thiazole + ADP + H(+). It participates in cofactor biosynthesis; thiamine diphosphate biosynthesis; 4-methyl-5-(2-phosphoethyl)-thiazole from 5-(2-hydroxyethyl)-4-methylthiazole: step 1/1. Functionally, catalyzes the phosphorylation of the hydroxyl group of 4-methyl-5-beta-hydroxyethylthiazole (THZ). This chain is Hydroxyethylthiazole kinase, found in Geobacillus thermodenitrificans (strain NG80-2).